A 216-amino-acid polypeptide reads, in one-letter code: Capsule polysaccharide export ATP-binding protein CtrD (216 aa).

The 214-residue stretch at 2-215 (ISVEHVSKRY…DKAYEYYNSL (214 aa)) folds into the ABC transporter domain. 38-45 (GRNGAGKS) contacts ATP.

The protein belongs to the ABC transporter superfamily.

The protein localises to the cell inner membrane. It carries out the reaction ATP + H2O + capsular polysaccharide-[capsular polysaccharide-binding protein]Side 1 = ADP + phosphate + capsular polysaccharideSide 2 + [capsular polysaccharide-binding protein]Side 1.. In terms of biological role, putative ATP-binding protein, and an energy-coupling component of capsule polysaccharide export apparatus. In Neisseria meningitidis serogroup B (strain ATCC BAA-335 / MC58), this protein is Capsule polysaccharide export ATP-binding protein CtrD (ctrD).